A 190-amino-acid chain; its full sequence is Potassium-transporting ATPase KdpC subunit (190 aa).

Residues 13–33 (IGFLLLTLVCGVLYPGVVTVF) form a helical membrane-spanning segment.

It belongs to the KdpC family. In terms of assembly, the system is composed of three essential subunits: KdpA, KdpB and KdpC.

It is found in the cell membrane. Functionally, part of the high-affinity ATP-driven potassium transport (or Kdp) system, which catalyzes the hydrolysis of ATP coupled with the electrogenic transport of potassium into the cytoplasm. This subunit acts as a catalytic chaperone that increases the ATP-binding affinity of the ATP-hydrolyzing subunit KdpB by the formation of a transient KdpB/KdpC/ATP ternary complex. The protein is Potassium-transporting ATPase KdpC subunit of Listeria monocytogenes serovar 1/2a (strain ATCC BAA-679 / EGD-e).